The following is a 99-amino-acid chain: MTNQIEKELIEKVAKLSNLKLKEEEIELFSNQFKDILSFIDKLNEVDVKDTLPFYELQIEEKSEREDIPTGSITNEEAIKNAPQAKGGFFVVPRVVGEE.

Belongs to the GatC family. As to quaternary structure, heterotrimer of A, B and C subunits.

It carries out the reaction L-glutamyl-tRNA(Gln) + L-glutamine + ATP + H2O = L-glutaminyl-tRNA(Gln) + L-glutamate + ADP + phosphate + H(+). The enzyme catalyses L-aspartyl-tRNA(Asn) + L-glutamine + ATP + H2O = L-asparaginyl-tRNA(Asn) + L-glutamate + ADP + phosphate + 2 H(+). In terms of biological role, allows the formation of correctly charged Asn-tRNA(Asn) or Gln-tRNA(Gln) through the transamidation of misacylated Asp-tRNA(Asn) or Glu-tRNA(Gln) in organisms which lack either or both of asparaginyl-tRNA or glutaminyl-tRNA synthetases. The reaction takes place in the presence of glutamine and ATP through an activated phospho-Asp-tRNA(Asn) or phospho-Glu-tRNA(Gln). The protein is Aspartyl/glutamyl-tRNA(Asn/Gln) amidotransferase subunit C of Sulfurihydrogenibium sp. (strain YO3AOP1).